Consider the following 255-residue polypeptide: Hydroxyacylglutathione hydrolase (255 aa).

Residues His-56, His-58, Asp-60, His-61, His-114, Asp-133, and His-171 each coordinate Zn(2+).

This sequence belongs to the metallo-beta-lactamase superfamily. Glyoxalase II family. As to quaternary structure, monomer. Zn(2+) serves as cofactor.

It catalyses the reaction an S-(2-hydroxyacyl)glutathione + H2O = a 2-hydroxy carboxylate + glutathione + H(+). The protein operates within secondary metabolite metabolism; methylglyoxal degradation; (R)-lactate from methylglyoxal: step 2/2. Functionally, thiolesterase that catalyzes the hydrolysis of S-D-lactoyl-glutathione to form glutathione and D-lactic acid. The sequence is that of Hydroxyacylglutathione hydrolase from Cereibacter sphaeroides (strain ATCC 17023 / DSM 158 / JCM 6121 / CCUG 31486 / LMG 2827 / NBRC 12203 / NCIMB 8253 / ATH 2.4.1.) (Rhodobacter sphaeroides).